Consider the following 60-residue polypeptide: Large ribosomal subunit protein uL30 (60 aa).

The protein belongs to the universal ribosomal protein uL30 family. As to quaternary structure, part of the 50S ribosomal subunit.

This chain is Large ribosomal subunit protein uL30, found in Acidothermus cellulolyticus (strain ATCC 43068 / DSM 8971 / 11B).